Reading from the N-terminus, the 340-residue chain is Sodium/bile acid cotransporter 7 (340 aa).

At 1 to 10 (MRLLERARKE) the chain is on the cytoplasmic side. The helical transmembrane segment at 11 to 31 (WFMVGIVVAIGAAKLEPSVGV) threads the bilayer. The Extracellular segment spans residues 32 to 37 (NGGPLK). Residues 38–58 (PEITVSYIAVATIFFNSGLSL) form a helical membrane-spanning segment. The Cytoplasmic portion of the chain corresponds to 59 to 71 (KTEELTSALVHLR). The chain crosses the membrane as a helical span at residues 72–92 (LHLFIQIFTLAFFPAAIWLFL). Residues 93–116 (QLLSVTSINEWLLKGLQTVGCMPP) lie on the Extracellular side of the membrane. A helical transmembrane segment spans residues 117 to 137 (PVSSAVILTKAVGGNEAAAIF). Residue Asn138 is a topological domain, cytoplasmic. A helical membrane pass occupies residues 139 to 159 (SAFGSFLGIVVTPVLLLLFLG). The Extracellular segment spans residues 160–163 (SSSS). The helical transmembrane segment at 164–184 (VPFTSIFSQLFMTVVVPLVIG) threads the bilayer. The Cytoplasmic segment spans residues 185–201 (QIVRRYIKDWLERKKPP). Residues 202-222 (FGVVSSSVLLMIIYTTFCDTF) traverse the membrane as a helical segment. The Extracellular segment spans residues 223 to 234 (SNPNIDLDKFSL). A helical membrane pass occupies residues 235 to 255 (ILILFIIVSVQLSFMLLTFIF). Topologically, residues 256-270 (STRNNSGFTPADTVA) are cytoplasmic. Residues 271–291 (IIFCSTHKSLTLGIPMLKIVF) form a helical membrane-spanning segment. Residues 292–298 (AGHEHLS) lie on the Extracellular side of the membrane. A helical membrane pass occupies residues 299–319 (LISVPLLIYHPAQILLGSVLV). At 320-340 (PTIKSWMVSRQKGVKLTRPTV) the chain is on the cytoplasmic side.

It belongs to the bile acid:sodium symporter (BASS) (TC 2.A.28) family. In terms of tissue distribution, expressed in heart, brain, colon, lung, liver, adrenal gland, stomach and ovary. Also expressed weakly in small intestine. Expressed in skeletal tissues.

The protein resides in the cell membrane. It is found in the endoplasmic reticulum membrane. The protein localises to the golgi apparatus membrane. In terms of biological role, involved in teeth and skeletal development. Has an essential role in the biosynthesis and trafficking of glycosaminoglycans and glycoproteins to produce a proper functioning extracellular matrix. Required for extracellular matrix mineralization. Also involved in the regulation of cellular calcium homeostasis. Does not show transport activity towards bile acids or steroid sulfates (including taurocholate, cholate, chenodeoxycholate, estrone-3-sulfate, dehydroepiandrosterone sulfate (DHEAS) and pregnenolone sulfate). In Mus musculus (Mouse), this protein is Sodium/bile acid cotransporter 7 (Slc10a7).